The following is a 262-amino-acid chain: Catechol O-methyltransferase domain-containing protein 1 (262 aa).

Residues 12–32 form a helical; Signal-anchor for type II membrane protein membrane-spanning segment; that stretch reads AALALGSAALGAAFATGLLLG. Residues D108, 110–111, S116, E134, V135, A163, D185, D187, and Y194 each bind S-adenosyl-L-methionine; that span reads GT.

Belongs to the class I-like SAM-binding methyltransferase superfamily. Cation-dependent O-methyltransferase family. As to quaternary structure, homodimer.

The protein resides in the membrane. Putative O-methyltransferase. This Mus musculus (Mouse) protein is Catechol O-methyltransferase domain-containing protein 1 (Comtd1).